The primary structure comprises 129 residues: Large ribosomal subunit protein bL19 (129 aa).

It belongs to the bacterial ribosomal protein bL19 family.

This protein is located at the 30S-50S ribosomal subunit interface and may play a role in the structure and function of the aminoacyl-tRNA binding site. This chain is Large ribosomal subunit protein bL19, found in Methylobacillus flagellatus (strain ATCC 51484 / DSM 6875 / VKM B-1610 / KT).